The primary structure comprises 1087 residues: Ubiquitin-associated protein 2-like (1087 aa).

M1 is subject to N-acetylmethionine. A disordered region spans residues 1-33 (MMTSVGTNRARGNWEQPQNQNQTQHKQRPQATA). In terms of domain architecture, UBA spans 49–89 (DFEEKVKQLIDITGKNQDECVIALHDCNGDVNRAINVLLEG). The segment at 92–234 (DTHSWEMVGK…TGHFEPDDGT (143 aa)) is disordered. Residues 118 to 132 (EEGKENRDRDRDYSR) show a composition bias toward basic and acidic residues. Residues 133 to 145 (RRGGPPRRGRGAS) are compositionally biased toward basic residues. 2 positions are modified to asymmetric dimethylarginine: R187 and R190. The segment covering 213-226 (NYGNSSGNTWNNTG) has biased composition (low complexity). Residues S356 and S360 each carry the phosphoserine modification. Residues 377–389 (AQHSQSGSTTTSS) show a composition bias toward low complexity. Residues 377-420 (AQHSQSGSTTTSSWDMGSTTQSPSLVQYDLKNPSDSAVHSPFTK) form a disordered region. Residues 390–401 (WDMGSTTQSPSL) show a composition bias toward polar residues. A phosphoserine mark is found at S410 and S416. Phosphothreonine is present on T425. S439, S454, S467, S470, S471, and S477 each carry phosphoserine. Disordered regions lie at residues 440 to 493 (PAVA…KKAS), 530 to 656 (SDYE…IPPL), and 669 to 794 (TNQH…LPPG). Low complexity-rich tracts occupy residues 474–485 (QSSSPQPAQQKL) and 534–569 (STPT…SQES). Residues 570-656 (GYQSGPIQST…SPSTSSIPPL (87 aa)) are compositionally biased toward polar residues. Residues S604, S605, S608, and S609 each carry the phosphoserine modification. Low complexity predominate over residues 688–784 (TTTTQHSSTL…STRSSVATTS (97 aa)). Phosphoserine is present on residues S852 and S859. The segment at 865 to 901 (FGRGDASSPAPATTLAQPQQNQTQTHHTTQQTFLNPA) is disordered. The span at 873-896 (PAPATTLAQPQQNQTQTHHTTQQT) shows a compositional bias: low complexity. S962 and V969 each carry omega-N-methylarginine. V969 and T976 each carry N6-acetyllysine. Positions 1040–1087 (QQPHSQILHHHLQQDGQTGSGQRSQTSSIPQKPQTNKSAYNSYSWGAN) are disordered. Low complexity predominate over residues 1053-1067 (QDGQTGSGQRSQTSS). Polar residues predominate over residues 1068–1087 (IPQKPQTNKSAYNSYSWGAN).

In terms of assembly, interacts with BMI1. Part of a complex consisting of UBAP2L, BMI1 and RNF2. Interacts with G3BP1 (via NTF2 domain); promoting stress granule formation. In terms of processing, acetylated. In terms of tissue distribution, ubiquitous.

Its subcellular location is the nucleus. It localises to the chromosome. It is found in the cytoplasm. The protein resides in the stress granule. In terms of biological role, recruits the ubiquitination machinery to RNA polymerase II for polyubiquitination, removal and degradation, when the transcription-coupled nucleotide excision repair (TC-NER) machinery fails to resolve DNA damage. Plays an important role in the activity of long-term repopulating hematopoietic stem cells (LT-HSCs). Is a regulator of stress granule assembly, required for their efficient formation. Required for proper brain development and neocortex lamination. The polypeptide is Ubiquitin-associated protein 2-like (Homo sapiens (Human)).